Consider the following 247-residue polypeptide: ATP synthase subunit a, chloroplastic (247 aa).

5 helical membrane-spanning segments follow: residues 38 to 58 (QVLI…LIAV), 95 to 115 (VPFI…GALL), 134 to 154 (INTT…AGLS), 199 to 219 (LVVV…VMFL), and 220 to 240 (GLFT…AYIG).

It belongs to the ATPase A chain family. As to quaternary structure, F-type ATPases have 2 components, CF(1) - the catalytic core - and CF(0) - the membrane proton channel. CF(1) has five subunits: alpha(3), beta(3), gamma(1), delta(1), epsilon(1). CF(0) has four main subunits: a, b, b' and c.

Its subcellular location is the plastid. The protein resides in the chloroplast thylakoid membrane. Key component of the proton channel; it plays a direct role in the translocation of protons across the membrane. The protein is ATP synthase subunit a, chloroplastic of Brachypodium distachyon (Purple false brome).